The sequence spans 203 residues: Large ribosomal subunit protein bL25 (203 aa).

It belongs to the bacterial ribosomal protein bL25 family. CTC subfamily. In terms of assembly, part of the 50S ribosomal subunit; part of the 5S rRNA/L5/L18/L25 subcomplex. Contacts the 5S rRNA. Binds to the 5S rRNA independently of L5 and L18.

In terms of biological role, this is one of the proteins that binds to the 5S RNA in the ribosome where it forms part of the central protuberance. The sequence is that of Large ribosomal subunit protein bL25 from Rickettsia typhi (strain ATCC VR-144 / Wilmington).